Consider the following 204-residue polypeptide: Small ribosomal subunit protein uS4 (204 aa).

Positions 22–43 (SGKELARRPYAPGDHGNTGRRP) are disordered. Residues 94–154 (TRLDSVVFRL…ERSKKIVPIL (61 aa)) enclose the S4 RNA-binding domain.

This sequence belongs to the universal ribosomal protein uS4 family. Part of the 30S ribosomal subunit. Contacts protein S5. The interaction surface between S4 and S5 is involved in control of translational fidelity.

Functionally, one of the primary rRNA binding proteins, it binds directly to 16S rRNA where it nucleates assembly of the body of the 30S subunit. Its function is as follows. With S5 and S12 plays an important role in translational accuracy. This is Small ribosomal subunit protein uS4 from Oenococcus oeni (strain ATCC BAA-331 / PSU-1).